A 558-amino-acid polypeptide reads, in one-letter code: WW domain-containing adapter protein with coiled-coil (558 aa).

Disordered stretches follow at residues 1–129, 159–244, and 321–461; these read MVMY…WSEH, QRQK…SPAP, and VAQQ…APGR. A compositionally biased stretch (polar residues) spans 22 to 32; it reads QPYQTLKYSSK. Basic and acidic residues-rich tracts occupy residues 33-46 and 56-70; these read SHPD…RDSN and RRSD…DNTG. The span at 72 to 82 shows a compositional bias: basic residues; the sequence is GRAKAIHPHRG. Positions 99–116 are enriched in low complexity; that stretch reads NHSSLHSSNSHSNPNKSS. The region spanning 120–153 is the WW domain; that stretch reads FEPADDWSEHISSSGKKYYYNCRTEVSQWEKPKE. Basic and acidic residues predominate over residues 175–184; it reads PKDRDYRREA. Over residues 188–200 the composition is skewed to polar residues; that stretch reads TPASYSSTKSSIA. Over residues 204–217 the composition is skewed to low complexity; it reads PSSLTPSSSSAAVS. Polar residues-rich tracts occupy residues 223–234 and 321–378; these read NSASSASGSTVP and VAQQ…MTVK. Residues 402–431 are compositionally biased toward low complexity; sequence SPRTLQRQSSQRSPSPGPNHMGSNSSSSSN. Residues 432 to 443 are compositionally biased toward gly residues; it reads NGGGGGGQGPGV. Positions 529–555 form a coiled coil; the sequence is QATLREQRILFLRQQIKELEKLKNQNS.

The protein localises to the nucleus. Its function is as follows. Acts as a linker between gene transcription and histone H2B monoubiquitination at 'Lys-120' (H2BK120ub1). Positive regulator of amino acid starvation-induced autophagy. Positively regulates MTOR activity. May negatively regulate the ubiquitin proteasome pathway. In Danio rerio (Zebrafish), this protein is WW domain-containing adapter protein with coiled-coil (waca).